The primary structure comprises 199 residues: Peptidyl-tRNA hydrolase (199 aa).

TRNA is bound at residue tyrosine 15. The active-site Proton acceptor is histidine 20. TRNA contacts are provided by tyrosine 66, asparagine 68, and asparagine 114.

Belongs to the PTH family. In terms of assembly, monomer.

The protein localises to the cytoplasm. The catalysed reaction is an N-acyl-L-alpha-aminoacyl-tRNA + H2O = an N-acyl-L-amino acid + a tRNA + H(+). Hydrolyzes ribosome-free peptidyl-tRNAs (with 1 or more amino acids incorporated), which drop off the ribosome during protein synthesis, or as a result of ribosome stalling. Its function is as follows. Catalyzes the release of premature peptidyl moieties from peptidyl-tRNA molecules trapped in stalled 50S ribosomal subunits, and thus maintains levels of free tRNAs and 50S ribosomes. This Burkholderia ambifaria (strain MC40-6) protein is Peptidyl-tRNA hydrolase.